The following is a 207-amino-acid chain: Small ribosomal subunit protein uS2 (207 aa).

This sequence belongs to the universal ribosomal protein uS2 family.

The polypeptide is Small ribosomal subunit protein uS2 (Nitrosopumilus maritimus (strain SCM1)).